A 189-amino-acid chain; its full sequence is Ribulose bisphosphate carboxylase small subunit, chloroplastic (189 aa).

The transit peptide at methionine 1–arginine 66 directs the protein to the chloroplast.

It belongs to the RuBisCO small chain family. Heterohexadecamer of 8 large and 8 small subunits.

The protein localises to the plastid. It localises to the chloroplast. In terms of biological role, ruBisCO catalyzes two reactions: the carboxylation of D-ribulose 1,5-bisphosphate, the primary event in carbon dioxide fixation, as well as the oxidative fragmentation of the pentose substrate. Both reactions occur simultaneously and in competition at the same active site. Although the small subunit is not catalytic it is essential for maximal activity. This is Ribulose bisphosphate carboxylase small subunit, chloroplastic from Larix laricina (Tamarack).